A 942-amino-acid chain; its full sequence is VPS35 endosomal protein sorting factor-like (942 aa).

It belongs to the VPS35L family. As to quaternary structure, component of the heterotrimeric retriever complex.

It localises to the endosome. Functionally, acts as a component of the retriever complex. The retriever complex is a heterotrimeric complex related to retromer cargo-selective complex (CSC) and essential for retromer-independent retrieval and recycling of numerous cargos. The polypeptide is VPS35 endosomal protein sorting factor-like (Drosophila melanogaster (Fruit fly)).